A 442-amino-acid chain; its full sequence is Trigger factor (442 aa).

One can recognise a PPIase FKBP-type domain in the interval Asn-163–Asn-248.

This sequence belongs to the FKBP-type PPIase family. Tig subfamily.

The protein localises to the cytoplasm. The catalysed reaction is [protein]-peptidylproline (omega=180) = [protein]-peptidylproline (omega=0). Functionally, involved in protein export. Acts as a chaperone by maintaining the newly synthesized protein in an open conformation. Functions as a peptidyl-prolyl cis-trans isomerase. The polypeptide is Trigger factor (Buchnera aphidicola subsp. Schizaphis graminum (strain Sg)).